A 361-amino-acid chain; its full sequence is POU domain, class 3, transcription factor 4-A (361 aa).

3 disordered regions span residues 100 to 131, 150 to 189, and 333 to 361; these read HVNH…GQPI, LTPP…EETP, and EKRM…CNEL. The segment covering 119–131 has biased composition (polar residues); sequence AHNSSLTSSGQPI. The span at 165–183 shows a compositional bias: basic and acidic residues; that stretch reads VLREPNDHVDLGSHHCQDH. Residues 186–260 form the POU-specific domain; sequence EETPTSDELE…LLNKWLEEAD (75 aa). A DNA-binding region (homeobox) is located at residues 278–337; it reads KRKKRTSIEVSVKGVLETHFLKCPKPAALEITSLADSLQLEKEVVRVWFCNRRQKEKRMT.

This sequence belongs to the POU transcription factor family. Class-3 subfamily. As to expression, from embryonic stage 10, expressed in the Spemann's organizer. During gastrulation, expressed in both the involuting mesoderm and the overlying neuroectoderm. During the neural plate and neural fold stages, expressed in the entire neuroectoderm with expression in discrete regions of the developing nervous system persisting at later stages. Transiently expressed in the pronephros from stages 24-32. In adults, expressed in the kidney and brain.

It is found in the nucleus. In terms of biological role, transcriptional activator. Induces neural-specific gene expression to act as a key regulator of neural differentiation. In Xenopus laevis (African clawed frog), this protein is POU domain, class 3, transcription factor 4-A (pou3f4-a).